The sequence spans 187 residues: UPF0200 protein MA_4660 (187 aa).

9–16 contacts ATP; the sequence is GMPASGKS.

Belongs to the UPF0200 family.

The sequence is that of UPF0200 protein MA_4660 from Methanosarcina acetivorans (strain ATCC 35395 / DSM 2834 / JCM 12185 / C2A).